The sequence spans 489 residues: Ribulose bisphosphate carboxylase large chain (489 aa).

Residues Asn128 and Thr178 each coordinate substrate. The Proton acceptor role is filled by Lys180. Lys182 is a substrate binding site. Mg(2+)-binding residues include Lys206, Asp208, and Glu209. The residue at position 206 (Lys206) is an N6-carboxylysine. The Proton acceptor role is filled by His298. Residues Arg299, His331, and Ser383 each coordinate substrate.

It belongs to the RuBisCO large chain family. Type I subfamily. In terms of assembly, heterohexadecamer of 8 large chains and 8 small chains. The cofactor is Mg(2+).

It carries out the reaction 2 (2R)-3-phosphoglycerate + 2 H(+) = D-ribulose 1,5-bisphosphate + CO2 + H2O. It catalyses the reaction D-ribulose 1,5-bisphosphate + O2 = 2-phosphoglycolate + (2R)-3-phosphoglycerate + 2 H(+). Functionally, ruBisCO catalyzes two reactions: the carboxylation of D-ribulose 1,5-bisphosphate, the primary event in carbon dioxide fixation, as well as the oxidative fragmentation of the pentose substrate. Both reactions occur simultaneously and in competition at the same active site. The protein is Ribulose bisphosphate carboxylase large chain of Nitrosospira multiformis (strain ATCC 25196 / NCIMB 11849 / C 71).